Reading from the N-terminus, the 171-residue chain is Large ribosomal subunit protein uL10 (171 aa).

It belongs to the universal ribosomal protein uL10 family. Part of the ribosomal stalk of the 50S ribosomal subunit. The N-terminus interacts with L11 and the large rRNA to form the base of the stalk. The C-terminus forms an elongated spine to which L12 dimers bind in a sequential fashion forming a multimeric L10(L12)X complex.

In terms of biological role, forms part of the ribosomal stalk, playing a central role in the interaction of the ribosome with GTP-bound translation factors. This chain is Large ribosomal subunit protein uL10, found in Corynebacterium diphtheriae (strain ATCC 700971 / NCTC 13129 / Biotype gravis).